A 144-amino-acid chain; its full sequence is 3-dehydroquinate dehydratase (144 aa).

Catalysis depends on tyrosine 22, which acts as the Proton acceptor. Substrate-binding residues include asparagine 73, histidine 79, and aspartate 86. The Proton donor role is filled by histidine 99. Residues isoleucine 100 to serine 101 and arginine 110 each bind substrate.

Belongs to the type-II 3-dehydroquinase family. Homododecamer.

It catalyses the reaction 3-dehydroquinate = 3-dehydroshikimate + H2O. It functions in the pathway metabolic intermediate biosynthesis; chorismate biosynthesis; chorismate from D-erythrose 4-phosphate and phosphoenolpyruvate: step 3/7. In terms of biological role, catalyzes a trans-dehydration via an enolate intermediate. In Mycobacteroides abscessus (strain ATCC 19977 / DSM 44196 / CCUG 20993 / CIP 104536 / JCM 13569 / NCTC 13031 / TMC 1543 / L948) (Mycobacterium abscessus), this protein is 3-dehydroquinate dehydratase.